Reading from the N-terminus, the 373-residue chain is Protein RETARDED ROOT GROWTH, mitochondrial (373 aa).

A mitochondrion-targeting transit peptide spans methionine 1–phenylalanine 49. A helical transmembrane segment spans residues glutamate 346–tyrosine 362.

Belongs to the RMD1/sif2 family. In terms of tissue distribution, predominantly expressed in the root meristem, in the primary and lateral root tips. Also present in leaves and pollen.

The protein localises to the mitochondrion membrane. The protein resides in the mitochondrion. Its function is as follows. Required for the maintenance of mitochondrial structure. Positive regulator of cell division and endoreduplication but negative regulator of cell expansion in the postembryonic root meristem, thus leading to the promotion of root growth. This is Protein RETARDED ROOT GROWTH, mitochondrial from Arabidopsis thaliana (Mouse-ear cress).